The primary structure comprises 481 residues: Docking protein 1 (481 aa).

The residue at position 1 (methionine 1) is an N-acetylmethionine. The region spanning 4–119 (AVMEGPLFLQ…WVQTLCRNAF (116 aa)) is the PH domain. Serine 48 carries the phosphoserine modification. The IRS-type PTB domain occupies 151 to 259 (EGSQFWVTVQ…HRQKAQGKAG (109 aa)). Phosphoserine is present on residues serine 269 and serine 291. The disordered stretch occupies residues 270–293 (HEGEVAEGKLPSPPGPQELLDSPP). A Phosphotyrosine modification is found at tyrosine 296. The segment at 307–329 (PCPSQDSLYSDPLDSTSAQAGEG) is disordered. The span at 310 to 325 (SQDSLYSDPLDSTSAQ) shows a compositional bias: polar residues. Phosphotyrosine occurs at positions 337 and 341. Position 362 is a phosphotyrosine; by INSR (tyrosine 362). Tyrosine 377 carries the phosphotyrosine modification. Tyrosine 398 is modified (phosphotyrosine; by INSR). The interval 404 to 481 (PATDDYAVPP…KTGVKSEGST (78 aa)) is disordered. Tyrosine 409 carries the post-translational modification Phosphotyrosine. Serine 416 is modified (phosphoserine). The span at 436 to 458 (ATGSGIKSHNSALYSQVQKSGAS) shows a compositional bias: polar residues. Phosphotyrosine is present on tyrosine 449. Serine 460 carries the post-translational modification Phosphoserine.

It belongs to the DOK family. Type A subfamily. Interacts with ABL1. Interacts with RasGAP and INPP5D/SHIP1. Interacts directly with phosphorylated ITGB3. Interacts with SRMS (via the SH2 and SH3 domains). Post-translationally, constitutively tyrosine-phosphorylated. Phosphorylated by TEC. Phosphorylated by LYN. Phosphorylated on tyrosine residues by the insulin receptor kinase. Results in the negative regulation of the insulin signaling pathway. Phosphorylated on tyrosine residues by SRMS. In terms of tissue distribution, expressed in pancreas, heart, leukocyte and spleen. Expressed in both resting and activated peripheral blood T-cells. Expressed in breast cancer.

The protein localises to the cytoplasm. It localises to the nucleus. It is found in the perinuclear region. Its function is as follows. DOK proteins are enzymatically inert adaptor or scaffolding proteins. They provide a docking platform for the assembly of multimolecular signaling complexes. DOK1 appears to be a negative regulator of the insulin signaling pathway. Modulates integrin activation by competing with talin for the same binding site on ITGB3. The polypeptide is Docking protein 1 (DOK1) (Homo sapiens (Human)).